Here is a 164-residue protein sequence, read N- to C-terminus: Phosphopantetheine adenylyltransferase (164 aa).

Position 14 (threonine 14) interacts with substrate. ATP is bound by residues 14-15 (TF) and histidine 22. Substrate-binding residues include lysine 46, leucine 78, and arginine 92. ATP is bound by residues 93–95 (GLR), glutamate 103, and 128–134 (HAFISST).

This sequence belongs to the bacterial CoaD family. In terms of assembly, homohexamer. Requires Mg(2+) as cofactor.

It is found in the cytoplasm. It catalyses the reaction (R)-4'-phosphopantetheine + ATP + H(+) = 3'-dephospho-CoA + diphosphate. Its pathway is cofactor biosynthesis; coenzyme A biosynthesis; CoA from (R)-pantothenate: step 4/5. Reversibly transfers an adenylyl group from ATP to 4'-phosphopantetheine, yielding dephospho-CoA (dPCoA) and pyrophosphate. The protein is Phosphopantetheine adenylyltransferase of Vibrio cholerae serotype O1 (strain ATCC 39541 / Classical Ogawa 395 / O395).